The chain runs to 593 residues: MNNRQINSLWSSIIIEELIRQGADFFCISPGSRSTPLTVAIARNPKARWKMFADERSAAFFALGYGRATARPAVLICTSGTAVANYFPAIVEASMDFQPILVLSADRPFELLECGANQTIRQENIFGSYTRWHMQLPVPSKEIPLKALLSTIAHAVVKTIGSPAGPVHLNQPFREPLEPEIPDLKDAWAAPLQEWLENGKPSGKSALPEKEPDAETLSLLREALAVAKEPLIIAGNMQKPEEAEAVEQLALELQIPLYTDFSSGLRLKSTTRPWQLAFASPHFTRHFKPDLVLHFGGHIIAKQPAAAIREWKPKHYIVVKNHANRLSPDHNVTLSIEASIASTAAKLKGCRTLSSGIINAATEEFFRRAEEEIDAECIGNKPVTEISAARLVSRLITAQQRLFLSNSMPVRDMDNFACSSHPHAIRSAINRGASGIDGIISTAAGFAEGDGKSTTLIIGDIAFLHDLNALSLLGAMTVPLQIIVLNNNGGGIFSFLPIAEYRDLMETHFATPQNYSIRSAAETFGLDYACPQTNQEFTRCYLEATGSPRSIIIELRSNRAENLHHHRALQARIETLTNHLYQGFIEKISEQPN.

It belongs to the TPP enzyme family. MenD subfamily. As to quaternary structure, homodimer. The cofactor is Mg(2+). Mn(2+) serves as cofactor. Requires thiamine diphosphate as cofactor.

It carries out the reaction isochorismate + 2-oxoglutarate + H(+) = 5-enolpyruvoyl-6-hydroxy-2-succinyl-cyclohex-3-ene-1-carboxylate + CO2. It participates in quinol/quinone metabolism; 1,4-dihydroxy-2-naphthoate biosynthesis; 1,4-dihydroxy-2-naphthoate from chorismate: step 2/7. It functions in the pathway quinol/quinone metabolism; menaquinone biosynthesis. Functionally, catalyzes the thiamine diphosphate-dependent decarboxylation of 2-oxoglutarate and the subsequent addition of the resulting succinic semialdehyde-thiamine pyrophosphate anion to isochorismate to yield 2-succinyl-5-enolpyruvyl-6-hydroxy-3-cyclohexene-1-carboxylate (SEPHCHC). The sequence is that of 2-succinyl-5-enolpyruvyl-6-hydroxy-3-cyclohexene-1-carboxylate synthase from Pelodictyon phaeoclathratiforme (strain DSM 5477 / BU-1).